We begin with the raw amino-acid sequence, 263 residues long: Pyruvate formate-lyase-activating enzyme (263 aa).

Positions 23–260 (VDGPGIRFVV…TETYEEYKKR (238 aa)) constitute a Radical SAM core domain. [4Fe-4S] cluster is bound by residues Cys-37, Cys-41, and Cys-44. Residues 43 to 45 (YCH), Gly-87, 142 to 144 (DIK), and His-215 contribute to the S-adenosyl-L-methionine site.

This sequence belongs to the organic radical-activating enzymes family. [4Fe-4S] cluster serves as cofactor.

It is found in the cytoplasm. The catalysed reaction is glycyl-[formate C-acetyltransferase] + reduced [flavodoxin] + S-adenosyl-L-methionine = glycin-2-yl radical-[formate C-acetyltransferase] + semiquinone [flavodoxin] + 5'-deoxyadenosine + L-methionine + H(+). Activation of pyruvate formate-lyase under anaerobic conditions by generation of an organic free radical, using S-adenosylmethionine and reduced flavodoxin as cosubstrates to produce 5'-deoxy-adenosine. The chain is Pyruvate formate-lyase-activating enzyme (act) from Streptococcus mutans serotype c (strain ATCC 700610 / UA159).